Reading from the N-terminus, the 487-residue chain is Calcium-binding tyrosine phosphorylation-regulated protein (487 aa).

One can recognise an RIIa domain in the interval 12-49; sequence YGLKTLLEGISRAVLKTNPSDINQFAAAYFQELTMYRG. Composition is skewed to basic and acidic residues over residues 78 to 91 and 101 to 117; these read KKLECLKEPEKTSV and KSTDTDEDNVTRTEYSD. Disordered regions lie at residues 78–163, 243–271, and 420–487; these read KKLE…AVSP, VDLGSQPKENEAEQSTASSVPLQDEQEPP, and IVSD…ATAE. The span at 140 to 152 shows a compositional bias: low complexity; the sequence is SSSKPATPKATTP. Composition is skewed to polar residues over residues 420–436 and 455–464; these read IVSDNTGQEESGENSVP and SGTSVKSSSG. Over residues 478–487 the composition is skewed to acidic residues; the sequence is IEPEGEATAE.

Interacts with FSCB. Post-translationally, phosphorylated on tyrosine residues during in vitro capacitation. Dephosphorylation affects its ability to bind calcium.

The protein resides in the cytoplasm. It is found in the cytoskeleton. Its subcellular location is the cell projection. It localises to the cilium. The protein localises to the flagellum. Its function is as follows. May function as a regulator of both motility- and head-associated functions such as capacitation and the acrosome reaction. May bind calcium in vitro. In Macaca fascicularis (Crab-eating macaque), this protein is Calcium-binding tyrosine phosphorylation-regulated protein (CABYR).